Here is a 330-residue protein sequence, read N- to C-terminus: Ketol-acid reductoisomerase (NADP(+)) (330 aa).

The region spanning 1-181 is the KARI N-terminal Rossmann domain; that stretch reads MNVYYEQDAD…GGAKAGVIET (181 aa). NADP(+) is bound by residues 24–27, R47, S50, S52, and 82–85; these read YGSQ and DQYQ. H107 is a catalytic residue. G133 provides a ligand contact to NADP(+). The region spanning 182-327 is the KARI C-terminal knotted domain; that stretch reads TIKDETETDL…AKLRNMMSWL (146 aa). 4 residues coordinate Mg(2+): D190, E194, E226, and E230. S251 is a substrate binding site.

It belongs to the ketol-acid reductoisomerase family. Requires Mg(2+) as cofactor.

It catalyses the reaction (2R)-2,3-dihydroxy-3-methylbutanoate + NADP(+) = (2S)-2-acetolactate + NADPH + H(+). The catalysed reaction is (2R,3R)-2,3-dihydroxy-3-methylpentanoate + NADP(+) = (S)-2-ethyl-2-hydroxy-3-oxobutanoate + NADPH + H(+). It functions in the pathway amino-acid biosynthesis; L-isoleucine biosynthesis; L-isoleucine from 2-oxobutanoate: step 2/4. The protein operates within amino-acid biosynthesis; L-valine biosynthesis; L-valine from pyruvate: step 2/4. In terms of biological role, involved in the biosynthesis of branched-chain amino acids (BCAA). Catalyzes an alkyl-migration followed by a ketol-acid reduction of (S)-2-acetolactate (S2AL) to yield (R)-2,3-dihydroxy-isovalerate. In the isomerase reaction, S2AL is rearranged via a Mg-dependent methyl migration to produce 3-hydroxy-3-methyl-2-ketobutyrate (HMKB). In the reductase reaction, this 2-ketoacid undergoes a metal-dependent reduction by NADPH to yield (R)-2,3-dihydroxy-isovalerate. This chain is Ketol-acid reductoisomerase (NADP(+)), found in Prosthecochloris aestuarii (strain DSM 271 / SK 413).